The sequence spans 60 residues: Large ribosomal subunit protein uL30 (60 aa).

This sequence belongs to the universal ribosomal protein uL30 family. In terms of assembly, part of the 50S ribosomal subunit.

The chain is Large ribosomal subunit protein uL30 from Syntrophobacter fumaroxidans (strain DSM 10017 / MPOB).